A 572-amino-acid polypeptide reads, in one-letter code: Arginine--tRNA ligase (572 aa).

A 'HIGH' region motif is present at residues 122-132 (PNLAKEMHVGH).

The protein belongs to the class-I aminoacyl-tRNA synthetase family. Monomer.

The protein localises to the cytoplasm. It catalyses the reaction tRNA(Arg) + L-arginine + ATP = L-arginyl-tRNA(Arg) + AMP + diphosphate. The polypeptide is Arginine--tRNA ligase (Neisseria gonorrhoeae (strain ATCC 700825 / FA 1090)).